Here is a 580-residue protein sequence, read N- to C-terminus: Proline--tRNA ligase (580 aa).

It belongs to the class-II aminoacyl-tRNA synthetase family. ProS type 1 subfamily. As to quaternary structure, homodimer.

It localises to the cytoplasm. It catalyses the reaction tRNA(Pro) + L-proline + ATP = L-prolyl-tRNA(Pro) + AMP + diphosphate. Catalyzes the attachment of proline to tRNA(Pro) in a two-step reaction: proline is first activated by ATP to form Pro-AMP and then transferred to the acceptor end of tRNA(Pro). As ProRS can inadvertently accommodate and process non-cognate amino acids such as alanine and cysteine, to avoid such errors it has two additional distinct editing activities against alanine. One activity is designated as 'pretransfer' editing and involves the tRNA(Pro)-independent hydrolysis of activated Ala-AMP. The other activity is designated 'posttransfer' editing and involves deacylation of mischarged Ala-tRNA(Pro). The misacylated Cys-tRNA(Pro) is not edited by ProRS. In Maridesulfovibrio salexigens (strain ATCC 14822 / DSM 2638 / NCIMB 8403 / VKM B-1763) (Desulfovibrio salexigens), this protein is Proline--tRNA ligase.